We begin with the raw amino-acid sequence, 277 residues long: Radial spoke head protein 9 homolog (277 aa).

The protein belongs to the flagellar radial spoke RSP9 family. As to quaternary structure, component of axonemal radial spoke complexes.

The protein resides in the cytoplasm. The protein localises to the cytoskeleton. It localises to the cilium axoneme. It is found in the flagellum axoneme. Its subcellular location is the cell projection. The protein resides in the kinocilium. Its function is as follows. Functions as part of axonemal radial spoke complexes that play an important part in the motility of sperm and cilia. Essential for both the radial spoke head assembly and the central pair microtubule stability in ependymal motile cilia. Required for motility of olfactory and neural cilia and for the structural integrity of ciliary axonemes in both 9+0 and 9+2 motile cilia. The sequence is that of Radial spoke head protein 9 homolog (rsph9) from Xenopus tropicalis (Western clawed frog).